The following is a 314-amino-acid chain: DNA-directed RNA polymerase subunit alpha (314 aa).

Residues 1 to 228 (MIEIEKPRIE…EHLNIFVSLT (228 aa)) are alpha N-terminal domain (alpha-NTD). The tract at residues 245–314 (KEKVLEMSIE…DLGLGLRKED (70 aa)) is alpha C-terminal domain (alpha-CTD).

Belongs to the RNA polymerase alpha chain family. In terms of assembly, homodimer. The RNAP catalytic core consists of 2 alpha, 1 beta, 1 beta' and 1 omega subunit. When a sigma factor is associated with the core the holoenzyme is formed, which can initiate transcription.

It carries out the reaction RNA(n) + a ribonucleoside 5'-triphosphate = RNA(n+1) + diphosphate. DNA-dependent RNA polymerase catalyzes the transcription of DNA into RNA using the four ribonucleoside triphosphates as substrates. The sequence is that of DNA-directed RNA polymerase subunit alpha from Staphylococcus epidermidis (strain ATCC 35984 / DSM 28319 / BCRC 17069 / CCUG 31568 / BM 3577 / RP62A).